The sequence spans 217 residues: Cytidylate kinase (217 aa).

An ATP-binding site is contributed by 9 to 17 (GPSSSGKSS).

It belongs to the cytidylate kinase family. Type 1 subfamily.

It is found in the cytoplasm. It catalyses the reaction CMP + ATP = CDP + ADP. The catalysed reaction is dCMP + ATP = dCDP + ADP. In Mycoplasma pneumoniae (strain ATCC 29342 / M129 / Subtype 1) (Mycoplasmoides pneumoniae), this protein is Cytidylate kinase.